The sequence spans 441 residues: Proline--tRNA ligase (441 aa).

The protein belongs to the class-II aminoacyl-tRNA synthetase family. ProS type 2 subfamily. Homodimer.

It is found in the cytoplasm. The catalysed reaction is tRNA(Pro) + L-proline + ATP = L-prolyl-tRNA(Pro) + AMP + diphosphate. Its function is as follows. Catalyzes the attachment of proline to tRNA(Pro) in a two-step reaction: proline is first activated by ATP to form Pro-AMP and then transferred to the acceptor end of tRNA(Pro). This Bartonella bacilliformis (strain ATCC 35685 / KC583 / Herrer 020/F12,63) protein is Proline--tRNA ligase.